The sequence spans 201 residues: Imidazole glycerol phosphate synthase subunit HisH 1 (201 aa).

Residues M1–L201 form the Glutamine amidotransferase type-1 domain. Residue C80 is the Nucleophile of the active site. Catalysis depends on residues H183 and E185.

As to quaternary structure, heterodimer of HisH and HisF.

It is found in the cytoplasm. It catalyses the reaction 5-[(5-phospho-1-deoxy-D-ribulos-1-ylimino)methylamino]-1-(5-phospho-beta-D-ribosyl)imidazole-4-carboxamide + L-glutamine = D-erythro-1-(imidazol-4-yl)glycerol 3-phosphate + 5-amino-1-(5-phospho-beta-D-ribosyl)imidazole-4-carboxamide + L-glutamate + H(+). The catalysed reaction is L-glutamine + H2O = L-glutamate + NH4(+). The protein operates within amino-acid biosynthesis; L-histidine biosynthesis; L-histidine from 5-phospho-alpha-D-ribose 1-diphosphate: step 5/9. In terms of biological role, IGPS catalyzes the conversion of PRFAR and glutamine to IGP, AICAR and glutamate. The HisH subunit provides the glutamine amidotransferase activity that produces the ammonia necessary to HisF for the synthesis of IGP and AICAR. The polypeptide is Imidazole glycerol phosphate synthase subunit HisH 1 (Campylobacter jejuni (strain RM1221)).